The chain runs to 228 residues: UPF0758 protein RALTA_A2508 (228 aa).

Residues 102-224 (GFDSPDSVRS…IRSLAESCER (123 aa)) enclose the MPN domain. Zn(2+) contacts are provided by His173, His175, and Asp186. The JAMM motif motif lies at 173–186 (HNHPRGTTAPSQSD).

Belongs to the UPF0758 family.

The sequence is that of UPF0758 protein RALTA_A2508 from Cupriavidus taiwanensis (strain DSM 17343 / BCRC 17206 / CCUG 44338 / CIP 107171 / LMG 19424 / R1) (Ralstonia taiwanensis (strain LMG 19424)).